Here is a 227-residue protein sequence, read N- to C-terminus: Cytochrome c oxidase subunit 2 (227 aa).

Residues 1–14 (MAYPFQLGLQDATS) are Mitochondrial intermembrane-facing. A helical membrane pass occupies residues 15–45 (PIMEELANFHDHTLMIVFLISSLVLYIISSM). Over 46-59 (LTTKLTHTSTMDAQ) the chain is Mitochondrial matrix. A helical transmembrane segment spans residues 60–87 (EVETIWTILPAVILILIALPSLRILYMM). The Mitochondrial intermembrane portion of the chain corresponds to 88 to 227 (DEINNPALTV…HFENWSASMI (140 aa)). 6 residues coordinate Cu cation: H161, C196, E198, C200, H204, and M207. E198 lines the Mg(2+) pocket.

The protein belongs to the cytochrome c oxidase subunit 2 family. Component of the cytochrome c oxidase (complex IV, CIV), a multisubunit enzyme composed of 14 subunits. The complex is composed of a catalytic core of 3 subunits MT-CO1, MT-CO2 and MT-CO3, encoded in the mitochondrial DNA, and 11 supernumerary subunits COX4I, COX5A, COX5B, COX6A, COX6B, COX6C, COX7A, COX7B, COX7C, COX8 and NDUFA4, which are encoded in the nuclear genome. The complex exists as a monomer or a dimer and forms supercomplexes (SCs) in the inner mitochondrial membrane with NADH-ubiquinone oxidoreductase (complex I, CI) and ubiquinol-cytochrome c oxidoreductase (cytochrome b-c1 complex, complex III, CIII), resulting in different assemblies (supercomplex SCI(1)III(2)IV(1) and megacomplex MCI(2)III(2)IV(2)). Found in a complex with TMEM177, COA6, COX18, COX20, SCO1 and SCO2. Interacts with TMEM177 in a COX20-dependent manner. Interacts with COX20. Interacts with COX16. Cu cation serves as cofactor.

It is found in the mitochondrion inner membrane. The catalysed reaction is 4 Fe(II)-[cytochrome c] + O2 + 8 H(+)(in) = 4 Fe(III)-[cytochrome c] + 2 H2O + 4 H(+)(out). Functionally, component of the cytochrome c oxidase, the last enzyme in the mitochondrial electron transport chain which drives oxidative phosphorylation. The respiratory chain contains 3 multisubunit complexes succinate dehydrogenase (complex II, CII), ubiquinol-cytochrome c oxidoreductase (cytochrome b-c1 complex, complex III, CIII) and cytochrome c oxidase (complex IV, CIV), that cooperate to transfer electrons derived from NADH and succinate to molecular oxygen, creating an electrochemical gradient over the inner membrane that drives transmembrane transport and the ATP synthase. Cytochrome c oxidase is the component of the respiratory chain that catalyzes the reduction of oxygen to water. Electrons originating from reduced cytochrome c in the intermembrane space (IMS) are transferred via the dinuclear copper A center (CU(A)) of subunit 2 and heme A of subunit 1 to the active site in subunit 1, a binuclear center (BNC) formed by heme A3 and copper B (CU(B)). The BNC reduces molecular oxygen to 2 water molecules using 4 electrons from cytochrome c in the IMS and 4 protons from the mitochondrial matrix. The polypeptide is Cytochrome c oxidase subunit 2 (MT-CO2) (Malacomys longipes (Big-eared swamp rat)).